The primary structure comprises 135 residues: MARSRFDTGSGPSQRQLRVGELIRRTLSSVLNQGDIHDPDLNRMSITVGEVRTSPDLKVATAYVLPLGGHGAQDALDALRRNRHELRRAVSKELTLKFSPELRFQIDETFDRMDETRRLLSQDHVRQDLDKPDED.

This sequence belongs to the RbfA family. Monomer. Binds 30S ribosomal subunits, but not 50S ribosomal subunits or 70S ribosomes.

It localises to the cytoplasm. In terms of biological role, one of several proteins that assist in the late maturation steps of the functional core of the 30S ribosomal subunit. Associates with free 30S ribosomal subunits (but not with 30S subunits that are part of 70S ribosomes or polysomes). Required for efficient processing of 16S rRNA. May interact with the 5'-terminal helix region of 16S rRNA. In Dinoroseobacter shibae (strain DSM 16493 / NCIMB 14021 / DFL 12), this protein is Ribosome-binding factor A.